Reading from the N-terminus, the 516-residue chain is Protein P54 (516 aa).

Residues 1–27 form the signal peptide; the sequence is MKKSLLSAVMLSSIALTAVGSPIAAAA. Residues 208 to 397 are disordered; sequence ATAEDKKADL…PAPAPAPNPS (190 aa). A compositionally biased stretch (basic and acidic residues) spans 210-236; the sequence is AEDKKADLNRKKAEAEAEQARIREQAR. Low complexity-rich tracts occupy residues 237–247 and 257–380; these read LAEQARQQAAQ and QAAA…TVTP. The span at 381 to 395 shows a compositional bias: pro residues; it reads APTPTPTPAPAPAPN. Residues 399 to 516 enclose the NlpC/P60 domain; the sequence is SVNGAAIVAE…WYTPDFAVSM (118 aa). Cys-429 functions as the Nucleophile in the catalytic mechanism. His-480 functions as the Proton acceptor in the catalytic mechanism. His-492 is a catalytic residue.

The protein belongs to the peptidase C40 family.

The protein resides in the secreted. The protein localises to the cell wall. This is Protein P54 from Enterococcus faecium (Streptococcus faecium).